Consider the following 163-residue polypeptide: UPF0763 protein CJJ81176_1011 (163 aa).

This sequence belongs to the UPF0763 family.

The protein is UPF0763 protein CJJ81176_1011 of Campylobacter jejuni subsp. jejuni serotype O:23/36 (strain 81-176).